The following is a 32-amino-acid chain: Cytochrome b6-f complex subunit 7 (32 aa).

A helical membrane pass occupies residues 9-27; the sequence is AAVFWVLIPVGLAGGALLL.

The protein belongs to the PetM family. In terms of assembly, the 4 large subunits of the cytochrome b6-f complex are cytochrome b6, subunit IV (17 kDa polypeptide, PetD), cytochrome f and the Rieske protein, while the 4 small subunits are PetG, PetL, PetM and PetN. The complex functions as a dimer.

It localises to the cellular thylakoid membrane. Its function is as follows. Component of the cytochrome b6-f complex, which mediates electron transfer between photosystem II (PSII) and photosystem I (PSI), cyclic electron flow around PSI, and state transitions. This Prochlorococcus marinus (strain MIT 9303) protein is Cytochrome b6-f complex subunit 7.